Here is a 314-residue protein sequence, read N- to C-terminus: MAFVTRQFVRSMSSSSSASAAAKKILIKHVTVIGGGLMGAGIAQVAAATGHTVVLVDQTEDILAKSKKGIEESLKRMAKKKFTENPKAADEFVEKTLSSLSTSTDAASVVHSTDLVVEAIVENLKLKNELFQRLDKFAAEHTIFASNTSSLQITNIANATTRQDRFAGLHFFNPVPMMKLVEVIKTPMTSQKTFESLVDFCKTLGKHPVSCKDTPGFIVNRLLVPYLIEAIRLHERGDASKEDIDTAMKLGAGYPMGPFELLDYVGLDTTKFILDGWHEMDPENPLFQPSPSMNNLVAQKKLGKKTGEGFYKYK.

The transit peptide at 1 to 12 (MAFVTRQFVRSM) directs the protein to the mitochondrion. Residues 34 to 39 (GGGLMG) and D57 contribute to the NAD(+) site. S73 is a CoA binding site. K75 carries the N6-acetyllysine modification. Residue K80 participates in CoA binding. The residue at position 80 (K80) is an N6-succinyllysine. N6-acetyllysine; alternate is present on residues K81 and K87. An N6-succinyllysine; alternate mark is found at K81 and K87. An NAD(+)-binding site is contributed by E122. Position 125 is an N6-acetyllysine (K125). K127 provides a ligand contact to NAD(+). At K127 the chain carries N6-(2-hydroxyisobutyryl)lysine. The residue at position 136 (K136) is an N6-acetyllysine; alternate. At K136 the chain carries N6-succinyllysine; alternate. NAD(+) is bound by residues S149 and N173. S149 lines the CoA pocket. An N6-acetyllysine modification is found at K179. An N6-acetyllysine; alternate mark is found at K185, K192, and K202. Residues K185, K192, and K202 each carry the N6-succinyllysine; alternate modification. K206 carries the N6-succinyllysine modification. N6-acetyllysine; alternate is present on residues K212 and K241. N6-succinyllysine; alternate is present on residues K212 and K241. K305 is a binding site for NAD(+). K312 bears the N6-acetyllysine; alternate mark. K312 is modified (N6-succinyllysine; alternate).

The protein belongs to the 3-hydroxyacyl-CoA dehydrogenase family. As to quaternary structure, homodimer. Interacts with GLUD1; this interaction inhibits the activation of glutamate dehydrogenase 1 (GLUD1). In terms of processing, succinylation at Lys-81, adjacent to a coenzyme A binding site. Desuccinylated by SIRT5.

It localises to the mitochondrion matrix. It carries out the reaction a (3S)-3-hydroxyacyl-CoA + NAD(+) = a 3-oxoacyl-CoA + NADH + H(+). It catalyses the reaction (3S)-3-hydroxybutanoyl-CoA + NAD(+) = acetoacetyl-CoA + NADH + H(+). The catalysed reaction is (3S)-hydroxydecanoyl-CoA + NAD(+) = 3-oxodecanoyl-CoA + NADH + H(+). The enzyme catalyses (3S)-hydroxyhexadecanoyl-CoA + NAD(+) = 3-oxohexadecanoyl-CoA + NADH + H(+). It participates in lipid metabolism; fatty acid beta-oxidation. Its function is as follows. Mitochondrial fatty acid beta-oxidation enzyme that catalyzes the third step of the beta-oxidation cycle for medium and short-chain 3-hydroxy fatty acyl-CoAs (C4 to C10). Plays a role in the control of insulin secretion by inhibiting the activation of glutamate dehydrogenase 1 (GLUD1), an enzyme that has an important role in regulating amino acid-induced insulin secretion. Plays a role in the maintenance of normal spermatogenesis through the reduction of fatty acid accumulation in the testes. This is Hydroxyacyl-coenzyme A dehydrogenase, mitochondrial (Hadh) from Rattus norvegicus (Rat).